A 485-amino-acid chain; its full sequence is Poly(ADP-ribose) glycohydrolase 2 (485 aa).

The protein belongs to the poly(ADP-ribose) glycohydrolase family. As to expression, expressed in head and tail neurons.

It localises to the cytoplasm. The enzyme catalyses [(1''-&gt;2')-ADP-alpha-D-ribose](n) + H2O = [(1''-&gt;2')-ADP-alpha-D-ribose](n-1) + ADP-D-ribose. Poly(ADP-ribose) synthesized after DNA damage is only present transiently and is rapidly degraded by poly(ADP-ribose) glycohydrolase. Poly(ADP-ribose) metabolism may be required for maintenance of the normal function of neuronal cells. This chain is Poly(ADP-ribose) glycohydrolase 2, found in Caenorhabditis elegans.